The sequence spans 609 residues: Putative 4-coumarate--CoA ligase-like 8 (609 aa).

6 residues coordinate ATP: Ser-194, Ser-195, Gly-196, Thr-197, Thr-198, and Lys-202. Phe-252 and Ser-256 together coordinate (E)-4-coumaroyl-AMP. Arg-274 contacts CoA. An SBD1 region spans residues 276-348; sequence SVEKTMAAVE…SCFPAVNLGQ (73 aa). (E)-4-coumaroyl-AMP is bound by residues Gly-326, Gln-348, Thr-353, and Met-361. Positions 348 and 353 each coordinate ATP. The SBD2 stretch occupies residues 349 to 450; that stretch reads CYGLTETTGI…VRGPSTMRGY (102 aa). Positions 482 and 497 each coordinate ATP. Positions 499 and 503 each coordinate (E)-4-coumaroyl-AMP. Position 506 (Ala-506) interacts with CoA. ATP is bound at residue Lys-589.

This sequence belongs to the ATP-dependent AMP-binding enzyme family. Requires Mg(2+) as cofactor.

It carries out the reaction (E)-4-coumarate + ATP + CoA = (E)-4-coumaroyl-CoA + AMP + diphosphate. The catalysed reaction is (E)-4-coumarate + ATP + H(+) = (E)-4-coumaroyl-AMP + diphosphate. The enzyme catalyses (E)-4-coumaroyl-AMP + CoA = (E)-4-coumaroyl-CoA + AMP + H(+). Its function is as follows. Carboxylate--CoA ligase that may use 4-coumarate as substrate. Follows a two-step reaction mechanism, wherein the carboxylate substrate first undergoes adenylation by ATP, followed by a thioesterification in the presence of CoA to yield the final CoA thioester. This chain is Putative 4-coumarate--CoA ligase-like 8 (4CLL8), found in Oryza sativa subsp. japonica (Rice).